A 406-amino-acid polypeptide reads, in one-letter code: Bifunctional enzyme IspD/IspF (406 aa).

The interval 1–247 is 2-C-methyl-D-erythritol 4-phosphate cytidylyltransferase; that stretch reads MSLIRVNGEA…AFFFNPAKDT (247 aa). The tract at residues 248-406 is 2-C-methyl-D-erythritol 2,4-cyclodiphosphate synthase; that stretch reads FIGMGFDTHA…HVSMRYKQKL (159 aa). Residues D254 and H256 each coordinate a divalent metal cation. 4-CDP-2-C-methyl-D-erythritol 2-phosphate contacts are provided by residues 254–256 and 280–281; these read DTH and HS. Residue H288 participates in a divalent metal cation binding. Residues 302–304, 307–311, 378–381, F385, and K388 contribute to the 4-CDP-2-C-methyl-D-erythritol 2-phosphate site; these read DIG, FPDND, and TTME.

It in the N-terminal section; belongs to the IspD/TarI cytidylyltransferase family. IspD subfamily. The protein in the C-terminal section; belongs to the IspF family. A divalent metal cation is required as a cofactor.

It carries out the reaction 2-C-methyl-D-erythritol 4-phosphate + CTP + H(+) = 4-CDP-2-C-methyl-D-erythritol + diphosphate. The enzyme catalyses 4-CDP-2-C-methyl-D-erythritol 2-phosphate = 2-C-methyl-D-erythritol 2,4-cyclic diphosphate + CMP. It participates in isoprenoid biosynthesis; isopentenyl diphosphate biosynthesis via DXP pathway; isopentenyl diphosphate from 1-deoxy-D-xylulose 5-phosphate: step 2/6. It functions in the pathway isoprenoid biosynthesis; isopentenyl diphosphate biosynthesis via DXP pathway; isopentenyl diphosphate from 1-deoxy-D-xylulose 5-phosphate: step 4/6. Functionally, bifunctional enzyme that catalyzes the formation of 4-diphosphocytidyl-2-C-methyl-D-erythritol from CTP and 2-C-methyl-D-erythritol 4-phosphate (MEP) (IspD), and catalyzes the conversion of 4-diphosphocytidyl-2-C-methyl-D-erythritol 2-phosphate (CDP-ME2P) to 2-C-methyl-D-erythritol 2,4-cyclodiphosphate (ME-CPP) with a corresponding release of cytidine 5-monophosphate (CMP) (IspF). In Helicobacter pylori (strain HPAG1), this protein is Bifunctional enzyme IspD/IspF.